The sequence spans 232 residues: Small heat shock protein, chloroplastic (232 aa).

The segment covering 1-25 has biased composition (polar residues); sequence MAQSVSLSTIASPILSQKPGSSVKS. Disordered stretches follow at residues 1–35 and 48–81; these read MAQS…SFPL and RAQA…RKPR. Residues 1–46 constitute a chloroplast transit peptide; it reads MAQSVSLSTIASPILSQKPGSSVKSTPPCMASFPLRRQLPRLGLRN. The segment covering 55–78 has biased composition (basic and acidic residues); the sequence is GDNKDNSVEVHRVNKDDQGTAVER. A sHSP domain is found at 124-232; that stretch reads IGGGEIRVPW…ERTVIDVQIQ (109 aa).

This sequence belongs to the small heat shock protein (HSP20) family.

It is found in the plastid. The protein localises to the chloroplast. The protein is Small heat shock protein, chloroplastic (HSP21) of Pisum sativum (Garden pea).